Reading from the N-terminus, the 309-residue chain is Dermonecrotic toxin LarSicTox-alphaIB2bi (309 aa).

Residue Val-1 is a signal peptide. Positions 2–27 (RATEKFAPIYFFCHPLQSAETDVAER) are excised as a propeptide. His-38 is an active-site residue. Mg(2+)-binding residues include Glu-58 and Asp-60. His-74 functions as the Nucleophile in the catalytic mechanism. 2 cysteine pairs are disulfide-bonded: Cys-78-Cys-84 and Cys-80-Cys-223. Residue Asp-118 coordinates Mg(2+). Asn-286 carries N-linked (GlcNAc...) asparagine glycosylation.

The protein belongs to the arthropod phospholipase D family. Class II subfamily. It depends on Mg(2+) as a cofactor. Expressed by the venom gland.

Its subcellular location is the secreted. The catalysed reaction is an N-(acyl)-sphingosylphosphocholine = an N-(acyl)-sphingosyl-1,3-cyclic phosphate + choline. The enzyme catalyses N-hexanoyl-sphing-4-enine-1-phosphocholine = N-(hexanoyl)-sphing-4-enine-1,3-cyclic phosphate + choline. It carries out the reaction N-(dodecanoyl)-sphing-4-enine-1-phosphocholine = N-dodecanoyl-sphing-4-enine-1,3-cyclic phosphate + choline. It catalyses the reaction a 1-acyl-sn-glycero-3-phosphocholine = a 1-acyl-sn-glycero-2,3-cyclic phosphate + choline. The catalysed reaction is 1-tetradecanoyl-sn-glycero-3-phosphocholine = 1-tetradecanoyl-sn-glycero-2,3-cyclic phosphate + choline. The enzyme catalyses 1-octanoyl-sn-glycero-3-phosphocholine = 1-octanoyl-sn-glycero-2,3-cyclic phosphate + choline. It carries out the reaction 1-hexadecanoyl-sn-glycero-3-phosphocholine = 1-hexadecanoyl-sn-glycero-2,3-cyclic phosphate + choline. It catalyses the reaction an N-(acyl)-sphingosylphosphoethanolamine = an N-(acyl)-sphingosyl-1,3-cyclic phosphate + ethanolamine. The catalysed reaction is N-dodecanoyl-heptadecasphing-4-enine-1-phosphoethanolamine = N-dodecanoyl-heptadecasphing-4-enine-1,3-cyclic phosphate + ethanolamine. Its function is as follows. Dermonecrotic toxins cleave the phosphodiester linkage between the phosphate and headgroup of certain phospholipids (sphingolipid and lysolipid substrates), forming an alcohol (often choline) and a cyclic phosphate. This toxin acts on sphingomyelin (SM) with high activity and on lysophosphatidylcholine (LPC) and ceramide phosphoethanolamine (CPE) with low activity. In vivo, shows potent insecticidal activities. On mammals, induces dermonecrosis, hemolysis, increased vascular permeability, edema, inflammatory response, and platelet aggregation. The polypeptide is Dermonecrotic toxin LarSicTox-alphaIB2bi (Loxosceles arizonica (Arizona brown spider)).